Here is a 496-residue protein sequence, read N- to C-terminus: Membrane-bound lytic murein transglycosylase F (496 aa).

Positions 1–31 (MPIFSTRVLTYLRCIFRLFIGLMLLLTLVGC) are cleaved as a signal peptide. Positions 32-271 (DFYTPSSQLE…KLDEKYFGHV (240 aa)) are non-LT domain. Residues 273 to 496 (NFDFVDTRTF…AEVVKQITLR (224 aa)) form an LT domain region. The active site involves Glu316. The segment at 464–485 (HRREELDEDDSSEPQSTERPTV) is disordered.

In the N-terminal section; belongs to the bacterial solute-binding protein 3 family. This sequence in the C-terminal section; belongs to the transglycosylase Slt family.

It localises to the cell outer membrane. The enzyme catalyses Exolytic cleavage of the (1-&gt;4)-beta-glycosidic linkage between N-acetylmuramic acid (MurNAc) and N-acetylglucosamine (GlcNAc) residues in peptidoglycan, from either the reducing or the non-reducing ends of the peptidoglycan chains, with concomitant formation of a 1,6-anhydrobond in the MurNAc residue.. Functionally, murein-degrading enzyme that degrades murein glycan strands and insoluble, high-molecular weight murein sacculi, with the concomitant formation of a 1,6-anhydromuramoyl product. Lytic transglycosylases (LTs) play an integral role in the metabolism of the peptidoglycan (PG) sacculus. Their lytic action creates space within the PG sacculus to allow for its expansion as well as for the insertion of various structures such as secretion systems and flagella. The protein is Membrane-bound lytic murein transglycosylase F of Aeromonas salmonicida (strain A449).